A 155-amino-acid chain; its full sequence is uncharacterized protein (155 aa).

Residues 1–23 form the signal peptide; the sequence is MRLMRNLMNALLLGAAASSLAVA. C86 and C91 are oxidised to a cystine.

Belongs to the ivy family.

The protein localises to the periplasm. This is an uncharacterized protein from Pseudomonas aeruginosa (strain ATCC 15692 / DSM 22644 / CIP 104116 / JCM 14847 / LMG 12228 / 1C / PRS 101 / PAO1).